We begin with the raw amino-acid sequence, 267 residues long: uncharacterized protein (267 aa).

Positions 17-248 constitute an ABC transporter domain; that stretch reads LKVENLTKIF…PRDRTSIEFL (232 aa). 53–60 is a binding site for ATP; the sequence is GPSGCGKT.

Belongs to the ABC transporter superfamily.

This is an uncharacterized protein from Methanocaldococcus jannaschii (strain ATCC 43067 / DSM 2661 / JAL-1 / JCM 10045 / NBRC 100440) (Methanococcus jannaschii).